The following is a 502-amino-acid chain: Glycerol kinase (502 aa).

ADP is bound at residue threonine 14. ATP-binding residues include threonine 14, threonine 15, and serine 16. Residue threonine 14 coordinates sn-glycerol 3-phosphate. Arginine 18 is a binding site for ADP. Sn-glycerol 3-phosphate is bound by residues arginine 84, glutamate 85, tyrosine 136, and aspartate 246. Glycerol is bound by residues arginine 84, glutamate 85, tyrosine 136, aspartate 246, and glutamine 247. ADP is bound by residues threonine 268 and glycine 311. Residues threonine 268, glycine 311, glutamine 315, and glycine 412 each contribute to the ATP site. ADP-binding residues include glycine 412 and asparagine 416.

The protein belongs to the FGGY kinase family. Homotetramer and homodimer (in equilibrium). Heterodimer with EIIA-Glc. Binds 1 zinc ion per glycerol kinase EIIA-Glc dimer. The zinc ion is important for dimerization.

The catalysed reaction is glycerol + ATP = sn-glycerol 3-phosphate + ADP + H(+). It functions in the pathway polyol metabolism; glycerol degradation via glycerol kinase pathway; sn-glycerol 3-phosphate from glycerol: step 1/1. Its activity is regulated as follows. Activity of this regulatory enzyme is affected by several metabolites. Allosterically and non-competitively inhibited by fructose 1,6-bisphosphate (FBP) and unphosphorylated phosphocarrier protein EIIA-Glc (III-Glc), an integral component of the bacterial phosphotransferase (PTS) system. Functionally, key enzyme in the regulation of glycerol uptake and metabolism. Catalyzes the phosphorylation of glycerol to yield sn-glycerol 3-phosphate. The polypeptide is Glycerol kinase (Shigella flexneri).